The chain runs to 344 residues: MMVIRPVERGDLAGLMQLAGKTGGGLTSLPADEKTLSSRIDRALQTWQGTLPKSEQGYVFVLEESDTGTVVGICAIEVAVGLNDPWYNYRVGTLVHASKELNVYNALPTLFLSNDHTGSSELCTLFLDPDWRKEGNGYLLSKSRFMFMAAFRDRFNEKVVAEMRGVIDETGYSPFWESLGERFFSMEFSRADYLCGTGQKAFIAELMPKHPIYTDFLSPQAQAVIGQVHPQTAPARAVLEKEGFRYHNYVDIFDGGPTLECDVDRVRAIRKSRLVTVAEGQPAPGEWPACLVANEQYDQFRAMLIHTNPTCERLVLTAAQLDVLKCNAGDTVRLVRLCPEEKTA.

Leu125 lines the succinyl-CoA pocket. The active-site Proton donor is His229.

The protein belongs to the arginine N-succinyltransferase family.

The catalysed reaction is succinyl-CoA + L-arginine = N(2)-succinyl-L-arginine + CoA + H(+). It functions in the pathway amino-acid degradation; L-arginine degradation via AST pathway; L-glutamate and succinate from L-arginine: step 1/5. Catalyzes the transfer of succinyl-CoA to arginine to produce N(2)-succinylarginine. The sequence is that of Arginine N-succinyltransferase from Enterobacter sp. (strain 638).